Consider the following 407-residue polypeptide: Type II secretion system protein L (407 aa).

Over 1-257 the chain is Cytoplasmic; it reads MEGSVSEFLT…WLRYWQIWRK (257 aa). Residues 258–275 form a helical membrane-spanning segment; sequence VAIAAGLFVAVSISYSLF. Topologically, residues 276 to 407 are periplasmic; it reads QAHQYEAQAD…VFGVFVVKPK (132 aa).

The protein belongs to the GSP L family. As to quaternary structure, type II secretion system is composed of four main components: the outer membrane complex, the inner membrane complex, the cytoplasmic secretion ATPase and the periplasm-spanning pseudopilus. Forms homodimers. Interacts with EpsM/GspM. Interacts with EpsE/GspE and EpsF/GspF.

It is found in the cell inner membrane. Its function is as follows. Inner membrane component of the type II secretion system required for the energy-dependent secretion of extracellular factors such as proteases and toxins from the periplasm. Plays a role in the complex assembly and recruits EpsM resulting in a stable complex in the inner membrane. Provides thus a link between the energy-providing EpsE protein in the cytoplasm and the rest of the T2SS machinery. The sequence is that of Type II secretion system protein L (epsL) from Vibrio cholerae serotype O1 (strain ATCC 39315 / El Tor Inaba N16961).